Here is a 256-residue protein sequence, read N- to C-terminus: Small ribosomal subunit protein eS1B (256 aa).

Position 2 is an N-acetylalanine; partial (alanine 2).

This sequence belongs to the eukaryotic ribosomal protein eS1 family. As to quaternary structure, component of the small ribosomal subunit. Mature ribosomes consist of a small (40S) and a large (60S) subunit. The 40S subunit contains about 33 different proteins and 1 molecule of RNA (18S). The 60S subunit contains about 49 different proteins and 3 molecules of RNA (25S, 5.8S and 5S).

The protein resides in the cytoplasm. The polypeptide is Small ribosomal subunit protein eS1B (Scheffersomyces stipitis (strain ATCC 58785 / CBS 6054 / NBRC 10063 / NRRL Y-11545) (Yeast)).